The chain runs to 483 residues: Glutathione reductase (483 aa).

M1 carries the N-acetylmethionine modification. Residue L2 is modified to N-acetylserine. Positions 33 and 34 each coordinate FAD. S33 serves as a coordination point for glutathione. R40 serves as a coordination point for glutathione. E53, T60, C61, and K69 together coordinate FAD. An intrachain disulfide couples C61 to C66. Y123 contacts glutathione. Residue A139 participates in FAD binding. 5 residues coordinate NADP(+): A205, I208, E211, R228, and R234. T243 is a glutathione binding site. An N-linked (GlcNAc...) asparagine glycan is attached at N278. G294 contributes to the NADP(+) binding site. D334 is an FAD binding site. E340 contributes to the NADP(+) binding site. Residue T342 participates in FAD binding. R350 provides a ligand contact to glutathione. NADP(+) is bound at residue V375. K425 provides a ligand contact to glutathione. Residue H472 coordinates FAD. H472 (proton acceptor) is an active-site residue.

Belongs to the class-I pyridine nucleotide-disulfide oxidoreductase family. Homodimer. FAD is required as a cofactor.

The protein resides in the cytoplasm. It is found in the nucleus. It localises to the mitochondrion. Its subcellular location is the peroxisome. It catalyses the reaction 2 glutathione + NADP(+) = glutathione disulfide + NADPH + H(+). Its function is as follows. Catalyzes the reduction of glutathione disulfide (GSSG) to reduced glutathione (GSH). Constitutes the major mechanism to maintain a high GSH:GSSG ratio in the cytosol. The chain is Glutathione reductase from Saccharomyces cerevisiae (strain ATCC 204508 / S288c) (Baker's yeast).